The chain runs to 285 residues: Bifunctional protein FolD (285 aa).

NADP(+)-binding positions include 166–168 (GAS), S191, and I232.

The protein belongs to the tetrahydrofolate dehydrogenase/cyclohydrolase family. In terms of assembly, homodimer.

The catalysed reaction is (6R)-5,10-methylene-5,6,7,8-tetrahydrofolate + NADP(+) = (6R)-5,10-methenyltetrahydrofolate + NADPH. It carries out the reaction (6R)-5,10-methenyltetrahydrofolate + H2O = (6R)-10-formyltetrahydrofolate + H(+). It participates in one-carbon metabolism; tetrahydrofolate interconversion. Catalyzes the oxidation of 5,10-methylenetetrahydrofolate to 5,10-methenyltetrahydrofolate and then the hydrolysis of 5,10-methenyltetrahydrofolate to 10-formyltetrahydrofolate. This Edwardsiella ictaluri (strain 93-146) protein is Bifunctional protein FolD.